We begin with the raw amino-acid sequence, 101 residues long: ATP synthase subunit f, mitochondrial (101 aa).

A mitochondrion-targeting transit peptide spans 1-6 (MIFKRA).

Belongs to the ATPase F chain family. In terms of assembly, F-type ATPases have 2 components, CF(1) - the catalytic core - and CF(0) - the membrane proton channel. In yeast, the dimeric form of ATP synthase consists of 17 polypeptides: alpha, beta, gamma, delta, epsilon, 4 (B), 5 (OSCP), 6 (A), 8, 9 (C), d, E (Tim11), f, g, h, i/j and k.

The protein resides in the mitochondrion. It localises to the mitochondrion inner membrane. In terms of biological role, mitochondrial membrane ATP synthase (F(1)F(0) ATP synthase or Complex V) produces ATP from ADP in the presence of a proton gradient across the membrane which is generated by electron transport complexes of the respiratory chain. F-type ATPases consist of two structural domains, F(1) - containing the extramembraneous catalytic core and F(0) - containing the membrane proton channel, linked together by a central stalk and a peripheral stalk. During catalysis, ATP synthesis in the catalytic domain of F(1) is coupled via a rotary mechanism of the central stalk subunits to proton translocation. Part of the complex F(0) domain. Minor subunit located with subunit a in the membrane. The chain is ATP synthase subunit f, mitochondrial (ATP17) from Saccharomyces cerevisiae (strain ATCC 204508 / S288c) (Baker's yeast).